Here is a 417-residue protein sequence, read N- to C-terminus: NADH-quinone oxidoreductase subunit D (417 aa).

It belongs to the complex I 49 kDa subunit family. As to quaternary structure, NDH-1 is composed of 14 different subunits. Subunits NuoB, C, D, E, F, and G constitute the peripheral sector of the complex.

The protein localises to the cell inner membrane. The enzyme catalyses a quinone + NADH + 5 H(+)(in) = a quinol + NAD(+) + 4 H(+)(out). In terms of biological role, NDH-1 shuttles electrons from NADH, via FMN and iron-sulfur (Fe-S) centers, to quinones in the respiratory chain. The immediate electron acceptor for the enzyme in this species is believed to be ubiquinone. Couples the redox reaction to proton translocation (for every two electrons transferred, four hydrogen ions are translocated across the cytoplasmic membrane), and thus conserves the redox energy in a proton gradient. This chain is NADH-quinone oxidoreductase subunit D, found in Janthinobacterium sp. (strain Marseille) (Minibacterium massiliensis).